Here is a 446-residue protein sequence, read N- to C-terminus: MSEDTISAIATANGIGSIAIIRISGDRALEIASKITHKDNFTPRYASLSNIYDFHGELIDEAIVIYFKAPFSFTAEDVVEIQCHGGFIVAQSILKTTLLHGARLATAGEFSKRAFFNGRIDLSKAEAIAQLIEAKSEDAAKILAQQMKGSLKEYVEKIRDDLIHILAYSEVSIDYAEEDLPEDLVMQIQAKLKELKTSLNKTLQASKAREGLMQGFKVAIIGKPNVGKSSLLNALLNYNRAIVSDIAGTTRDTIEEQVKIGTHLIRIVDTAGIREASDEIERIGIERSLEAINESDIVIALFDASRVADYEDEQILSLIESKAGSKNVLHVKNKIDLEEKFYRSSLEFDIEINSKEGVEELILALENIMNQANTSDEMMLISQRQIGAVQNTLNYIDEAFEPLQEQELEIFSFNLNEAIKEIASITRPFENDEMLDKMFGSFCLGK.

(6S)-5-formyl-5,6,7,8-tetrahydrofolate contacts are provided by R22, E80, and R119. The region spanning G215 to N370 is the TrmE-type G domain. N225 serves as a coordination point for K(+). Residues N225–S230, S244–T250, and D269–G272 contribute to the GTP site. Mg(2+) is bound at residue S229. K(+) is bound by residues S244, I246, and T249. T250 contributes to the Mg(2+) binding site. K446 contacts (6S)-5-formyl-5,6,7,8-tetrahydrofolate.

This sequence belongs to the TRAFAC class TrmE-Era-EngA-EngB-Septin-like GTPase superfamily. TrmE GTPase family. As to quaternary structure, homodimer. Heterotetramer of two MnmE and two MnmG subunits. It depends on K(+) as a cofactor.

Its subcellular location is the cytoplasm. In terms of biological role, exhibits a very high intrinsic GTPase hydrolysis rate. Involved in the addition of a carboxymethylaminomethyl (cmnm) group at the wobble position (U34) of certain tRNAs, forming tRNA-cmnm(5)s(2)U34. In Sulfurimonas denitrificans (strain ATCC 33889 / DSM 1251) (Thiomicrospira denitrificans (strain ATCC 33889 / DSM 1251)), this protein is tRNA modification GTPase MnmE.